The chain runs to 142 residues: Large ribosomal subunit protein uL13 (142 aa).

It belongs to the universal ribosomal protein uL13 family. Part of the 50S ribosomal subunit.

Its function is as follows. This protein is one of the early assembly proteins of the 50S ribosomal subunit, although it is not seen to bind rRNA by itself. It is important during the early stages of 50S assembly. The chain is Large ribosomal subunit protein uL13 from Caldicellulosiruptor saccharolyticus (strain ATCC 43494 / DSM 8903 / Tp8T 6331).